The chain runs to 735 residues: Peroxisomal multifunctional enzyme type 2 (735 aa).

Residues 1–305 (MASPLRFDGR…VEVLHKVDSE (305 aa)) form a (3R)-hydroxyacyl-CoA dehydrogenase region. Residues 13–37 (LVTG…ALVI), leucine 21, and aspartate 40 each bind NAD(+). Position 46 is an N6-acetyllysine; alternate (lysine 46). Residue lysine 46 is modified to N6-succinyllysine; alternate. Serine 52 bears the Phosphoserine mark. Lysine 57 and lysine 68 each carry N6-succinyllysine. 75-76 (SV) provides a ligand contact to NAD(+). Lysine 84 carries the N6-succinyllysine modification. Asparagine 99 is an NAD(+) binding site. Serine 151 contacts substrate. Tyrosine 164 acts as the Proton acceptor in catalysis. NAD(+) contacts are provided by residues 164-168 (YSAAK) and 196-199 (AGSR). Threonine 265 bears the Phosphothreonine mark. N6-succinyllysine is present on lysine 275. Serine 304 and serine 308 each carry phosphoserine. Residues 321 to 621 (SGFVGAVGHK…TQTPSEGGEL (301 aa)) form an enoyl-CoA hydratase 2 region. Lysine 355 carries the post-translational modification N6-succinyllysine. Position 405–406 (405–406 (HG)) interacts with (3R)-3-hydroxydecanoyl-CoA. Lysine 423 carries the post-translational modification N6-succinyllysine. Residues lysine 434, 509–514 (DWNPLH), glycine 532, and phenylalanine 562 each bind (3R)-3-hydroxydecanoyl-CoA. Positions 483-599 (VPNRPPDAVL…HETGDVVISN (117 aa)) constitute a MaoC-like domain. Lysine 564 carries the N6-acetyllysine modification. An N6-succinyllysine mark is found at lysine 578 and lysine 662. Positions 623–735 (SALVFGEIGR…QMILKDYAKL (113 aa)) constitute an SCP2 domain. Lysine 668 is subject to N6-acetyllysine. Glutamine 705 serves as a coordination point for substrate. Residue lysine 706 is modified to N6-acetyllysine. Glutamine 723 contributes to the substrate binding site. Lysine 724 is subject to N6-succinyllysine. The Microbody targeting signal motif lies at 733 to 735 (AKL).

This sequence belongs to the short-chain dehydrogenases/reductases (SDR) family. In terms of assembly, homodimer. Present in many tissues with highest concentrations in liver and kidney.

It is found in the peroxisome. It carries out the reaction a (3R)-3-hydroxyacyl-CoA + NAD(+) = a 3-oxoacyl-CoA + NADH + H(+). It catalyses the reaction (24R,25R)-3alpha,7alpha,12alpha,24-tetrahydroxy-5beta-cholestan-26-oyl-CoA = (24E)-3alpha,7alpha,12alpha-trihydroxy-5beta-cholest-24-en-26-oyl-CoA + H2O. The catalysed reaction is a (3R)-3-hydroxyacyl-CoA = a (2E)-enoyl-CoA + H2O. The enzyme catalyses (2E)-octenoyl-CoA + H2O = (3R)-hydroxyoctanoyl-CoA. It carries out the reaction (3R)-hydroxyoctanoyl-CoA + NAD(+) = 3-oxooctanoyl-CoA + NADH + H(+). It catalyses the reaction (3R)-hydroxyhexadecanoyl-CoA + NAD(+) = 3-oxohexadecanoyl-CoA + NADH + H(+). The catalysed reaction is (2E)-hexadecenedioyl-CoA + H2O = (3R)-hydroxyhexadecanedioyl-CoA. The enzyme catalyses (3R)-hydroxyhexadecanedioyl-CoA + NAD(+) = 3-oxohexadecanedioyl-CoA + NADH + H(+). It carries out the reaction (3R)-hydroxyhexadecanoyl-CoA = (2E)-hexadecenoyl-CoA + H2O. It catalyses the reaction (3R)-3-hydroxydecanoyl-CoA = (2E)-decenoyl-CoA + H2O. The catalysed reaction is (3R)-3-hydroxydecanoyl-CoA + NAD(+) = 3-oxodecanoyl-CoA + NADH + H(+). The enzyme catalyses (24R,25R)-3alpha,7alpha,12alpha,24-tetrahydroxy-5beta-cholestan-26-oyl-CoA + NAD(+) = 3alpha,7alpha,12alpha-trihydroxy-24-oxo-5beta-cholestan-26-oyl-CoA + NADH + H(+). The protein operates within lipid metabolism; fatty acid beta-oxidation. Bifunctional enzyme acting on the peroxisomal fatty acid beta-oxidation pathway. Catalyzes two of the four reactions in fatty acid degradation: hydration of 2-enoyl-CoA (trans-2-enoyl-CoA) to produce (3R)-3-hydroxyacyl-CoA, and dehydrogenation of (3R)-3-hydroxyacyl-CoA to produce 3-ketoacyl-CoA (3-oxoacyl-CoA), which is further metabolized by SCPx. Can use straight-chain and branched-chain fatty acids, as well as bile acid intermediates as substrates. This is Peroxisomal multifunctional enzyme type 2 from Mus musculus (Mouse).